Reading from the N-terminus, the 161-residue chain is ATP synthase subunit b 1 (161 aa).

Residues 3 to 23 (LDATFYALVGLILFFVLIAYL) traverse the membrane as a helical segment.

The protein belongs to the ATPase B chain family. F-type ATPases have 2 components, F(1) - the catalytic core - and F(0) - the membrane proton channel. F(1) has five subunits: alpha(3), beta(3), gamma(1), delta(1), epsilon(1). F(0) has three main subunits: a(1), b(2) and c(10-14). The alpha and beta chains form an alternating ring which encloses part of the gamma chain. F(1) is attached to F(0) by a central stalk formed by the gamma and epsilon chains, while a peripheral stalk is formed by the delta and b chains.

Its subcellular location is the cell inner membrane. F(1)F(0) ATP synthase produces ATP from ADP in the presence of a proton or sodium gradient. F-type ATPases consist of two structural domains, F(1) containing the extramembraneous catalytic core and F(0) containing the membrane proton channel, linked together by a central stalk and a peripheral stalk. During catalysis, ATP synthesis in the catalytic domain of F(1) is coupled via a rotary mechanism of the central stalk subunits to proton translocation. Its function is as follows. Component of the F(0) channel, it forms part of the peripheral stalk, linking F(1) to F(0). The chain is ATP synthase subunit b 1 from Rhizobium meliloti (strain 1021) (Ensifer meliloti).